The sequence spans 197 residues: Imidazoleglycerol-phosphate dehydratase (197 aa).

Belongs to the imidazoleglycerol-phosphate dehydratase family.

It localises to the cytoplasm. The enzyme catalyses D-erythro-1-(imidazol-4-yl)glycerol 3-phosphate = 3-(imidazol-4-yl)-2-oxopropyl phosphate + H2O. The protein operates within amino-acid biosynthesis; L-histidine biosynthesis; L-histidine from 5-phospho-alpha-D-ribose 1-diphosphate: step 6/9. This is Imidazoleglycerol-phosphate dehydratase from Pseudomonas putida (strain GB-1).